The following is a 263-amino-acid chain: 3-methyl-2-oxobutanoate hydroxymethyltransferase (263 aa).

The Mg(2+) site is built by aspartate 44 and aspartate 83. 3-methyl-2-oxobutanoate is bound by residues 44-45 (DS), aspartate 83, and lysine 112. A Mg(2+)-binding site is contributed by glutamate 114. Glutamate 181 serves as the catalytic Proton acceptor.

Belongs to the PanB family. As to quaternary structure, homodecamer; pentamer of dimers. Requires Mg(2+) as cofactor.

The protein localises to the cytoplasm. It catalyses the reaction 3-methyl-2-oxobutanoate + (6R)-5,10-methylene-5,6,7,8-tetrahydrofolate + H2O = 2-dehydropantoate + (6S)-5,6,7,8-tetrahydrofolate. The protein operates within cofactor biosynthesis; (R)-pantothenate biosynthesis; (R)-pantoate from 3-methyl-2-oxobutanoate: step 1/2. Catalyzes the reversible reaction in which hydroxymethyl group from 5,10-methylenetetrahydrofolate is transferred onto alpha-ketoisovalerate to form ketopantoate. The chain is 3-methyl-2-oxobutanoate hydroxymethyltransferase from Sulfurimonas denitrificans (strain ATCC 33889 / DSM 1251) (Thiomicrospira denitrificans (strain ATCC 33889 / DSM 1251)).